We begin with the raw amino-acid sequence, 247 residues long: 3-deoxy-manno-octulosonate cytidylyltransferase (247 aa).

The protein belongs to the KdsB family.

The protein resides in the cytoplasm. The enzyme catalyses 3-deoxy-alpha-D-manno-oct-2-ulosonate + CTP = CMP-3-deoxy-beta-D-manno-octulosonate + diphosphate. It functions in the pathway nucleotide-sugar biosynthesis; CMP-3-deoxy-D-manno-octulosonate biosynthesis; CMP-3-deoxy-D-manno-octulosonate from 3-deoxy-D-manno-octulosonate and CTP: step 1/1. Its pathway is bacterial outer membrane biogenesis; lipopolysaccharide biosynthesis. Activates KDO (a required 8-carbon sugar) for incorporation into bacterial lipopolysaccharide in Gram-negative bacteria. The protein is 3-deoxy-manno-octulosonate cytidylyltransferase of Methylobacterium nodulans (strain LMG 21967 / CNCM I-2342 / ORS 2060).